The following is a 623-amino-acid chain: Glutathione import ATP-binding protein GsiA (623 aa).

ABC transporter domains are found at residues valine 15–leucine 269 and leucine 325–methionine 564. ATP-binding positions include glycine 49–serine 56 and glycine 357–serine 364.

It belongs to the ABC transporter superfamily. Glutathione importer (TC 3.A.1.5.11) family. As to quaternary structure, the complex is composed of two ATP-binding proteins (GsiA), two transmembrane proteins (GsiC and GsiD) and a solute-binding protein (GsiB).

The protein localises to the cell inner membrane. The enzyme catalyses glutathione(out) + ATP + H2O = glutathione(in) + ADP + phosphate + H(+). Part of the ABC transporter complex GsiABCD involved in glutathione import. Responsible for energy coupling to the transport system. The sequence is that of Glutathione import ATP-binding protein GsiA from Salmonella typhi.